Here is a 199-residue protein sequence, read N- to C-terminus: LexA repressor (199 aa).

Positions 28 to 47 (IRDIAKHFKLTPRGAHIHVI) form a DNA-binding region, H-T-H motif. Catalysis depends on for autocatalytic cleavage activity residues serine 120 and lysine 157.

This sequence belongs to the peptidase S24 family. As to quaternary structure, homodimer.

It carries out the reaction Hydrolysis of Ala-|-Gly bond in repressor LexA.. Its function is as follows. Represses a number of genes involved in the response to DNA damage (SOS response), including recA and lexA. In the presence of single-stranded DNA, RecA interacts with LexA causing an autocatalytic cleavage which disrupts the DNA-binding part of LexA, leading to derepression of the SOS regulon and eventually DNA repair. The sequence is that of LexA repressor from Thermosipho melanesiensis (strain DSM 12029 / CIP 104789 / BI429).